Consider the following 57-residue polypeptide: Large ribosomal subunit protein bL32 (57 aa).

Residues 1 to 19 are compositionally biased toward basic residues; it reads MATPKRRMSRANTRSRRSQ. The interval 1-21 is disordered; it reads MATPKRRMSRANTRSRRSQWK.

Belongs to the bacterial ribosomal protein bL32 family.

The chain is Large ribosomal subunit protein bL32 from Mycobacterium ulcerans (strain Agy99).